The chain runs to 307 residues: Putative F-box/LRR-repeat protein 22 (307 aa).

The segment covering 1–15 has biased composition (polar residues); it reads MVTSSSSPPLATSQL. The segment at 1-26 is disordered; sequence MVTSSSSPPLATSQLPVMKGEEKPSN. The F-box domain maps to 24 to 71; it reads PSNWAELPPDLLSSILLRLSPLEILENARKVCRSWRRVSKDPLIWRRI. 5 LRR repeats span residues 108-133, 158-183, 185-210, 212-237, and 244-270; these read WRFQTTSLLNYMAERSSNLRRLRVKG, YCSIEEEHFKTIGQACPNLKTLKLVG, WSHLNESDNDALAIADTMPGLLHLQL, SNGLTNIGLNAILDGCPHLECLDLRQ, and FGDLERQCLERIKDFRCPNDVLDDYNY. Positions 279 to 289 are enriched in acidic residues; it reads IEDEKGEEEEN. The segment at 279 to 307 is disordered; that stretch reads IEDEKGEEEENYSYGSDDTEYGYRRSADF.

In Arabidopsis thaliana (Mouse-ear cress), this protein is Putative F-box/LRR-repeat protein 22 (FBL22).